The primary structure comprises 190 residues: Shikimate kinase (190 aa).

14-19 (GSGKST) contributes to the ATP binding site. Serine 18 contacts Mg(2+). Substrate contacts are provided by aspartate 36, arginine 60, and glycine 82. Arginine 120 contributes to the ATP binding site. Position 147 (arginine 147) interacts with substrate.

This sequence belongs to the shikimate kinase family. Monomer. Requires Mg(2+) as cofactor.

The protein resides in the cytoplasm. The catalysed reaction is shikimate + ATP = 3-phosphoshikimate + ADP + H(+). Its pathway is metabolic intermediate biosynthesis; chorismate biosynthesis; chorismate from D-erythrose 4-phosphate and phosphoenolpyruvate: step 5/7. Catalyzes the specific phosphorylation of the 3-hydroxyl group of shikimic acid using ATP as a cosubstrate. The protein is Shikimate kinase of Chlorobium phaeobacteroides (strain DSM 266 / SMG 266 / 2430).